Here is a 316-residue protein sequence, read N- to C-terminus: Lys-63-specific deubiquitinase BRCC36 (316 aa).

The residue at position 2 (alanine 2) is an N-acetylalanine. An MPN domain is found at 12 to 179; sequence VHLESDAFLV…YTCFQSIQAQ (168 aa). Zn(2+) contacts are provided by histidine 122, histidine 124, and aspartate 135. The JAMM motif motif lies at 122–135; it reads HSHPHITVWPSHVD. Phosphoserine is present on serine 258.

It belongs to the peptidase M67A family. BRCC36 subfamily. In terms of assembly, component of the ARISC complex, at least composed of UIMC1/RAP80, ABRAXAS1, BRCC3/BRCC36, BABAM2 and BABAM1/NBA1. Component of the BRCA1-A complex, at least composed of BRCA1, BARD1, UIMC1/RAP80, ABRAXAS1, BRCC3/BRCC36, BABAM2 and BABAM1/NBA1. In the BRCA1-A complex, interacts directly with ABRAXAS1 and BABAM2. Component of the BRISC complex, at least composed of ABRAXAS2, BRCC3/BRCC36, BABAM2 and BABAM1/NBA1. Identified in a complex with SHMT2 and the other subunits of the BRISC complex. In the BRISC complex, interacts directly with ABRAXAS2. Identified in a complex with ABRAXAS2 and NUMA1. The BRISC complex interacts with the CSN complex. Component of the BRCA1/BRCA2 containing complex (BRCC), which also contains BRCA1, BRCA2, BARD1, BABAM2 and RAD51. BRCC is a ubiquitin E3 ligase complex that enhances cellular survival following DNA damage. Interacts with BRCA1. Binds polyubiquitin. Interacts with PWWP2B. Interacts with HDAC1; this interaction is enhanced in the presence of PWWP2B. Zn(2+) is required as a cofactor.

Its subcellular location is the nucleus. The protein resides in the cytoplasm. It localises to the cytoskeleton. It is found in the spindle pole. In terms of biological role, metalloprotease that specifically cleaves 'Lys-63'-linked polyubiquitin chains. Does not have activity toward 'Lys-48'-linked polyubiquitin chains. Component of the BRCA1-A complex, a complex that specifically recognizes 'Lys-63'-linked ubiquitinated histones H2A and H2AX at DNA lesions sites, leading to target the BRCA1-BARD1 heterodimer to sites of DNA damage at double-strand breaks (DSBs). In the BRCA1-A complex, it specifically removes 'Lys-63'-linked ubiquitin on histones H2A and H2AX, antagonizing the RNF8-dependent ubiquitination at double-strand breaks (DSBs). Catalytic subunit of the BRISC complex, a multiprotein complex that specifically cleaves 'Lys-63'-linked ubiquitin in various substrates. Mediates the specific 'Lys-63'-specific deubiquitination associated with the COP9 signalosome complex (CSN), via the interaction of the BRISC complex with the CSN complex. The BRISC complex is required for normal mitotic spindle assembly and microtubule attachment to kinetochores via its role in deubiquitinating NUMA1. Plays a role in interferon signaling via its role in the deubiquitination of the interferon receptor IFNAR1; deubiquitination increases IFNAR1 activity by enhancing its stability and cell surface expression. Acts as a regulator of the NLRP3 inflammasome by mediating deubiquitination of NLRP3, leading to NLRP3 inflammasome assembly. Down-regulates the response to bacterial lipopolysaccharide (LPS) via its role in IFNAR1 deubiquitination. Deubiquitinates HDAC1 and PWWP2B leading to their stabilization. In Callithrix jacchus (White-tufted-ear marmoset), this protein is Lys-63-specific deubiquitinase BRCC36 (BRCC3).